A 353-amino-acid polypeptide reads, in one-letter code: Photosystem II D2 protein (353 aa).

An N-acetylthreonine modification is found at Thr-2. Thr-2 carries the phosphothreonine modification. Residues 41 to 61 (CAYFAVGGWFTGTTFVTSWYT) traverse the membrane as a helical segment. His-118 is a binding site for chlorophyll a. The chain crosses the membrane as a helical span at residues 125 to 141 (GFMLRQFELARSVQLRP). Pheophytin a-binding residues include Gln-130 and Asn-143. Residues 153–166 (VFVSVFLIYPLGQS) traverse the membrane as a helical segment. Position 198 (His-198) interacts with chlorophyll a. A helical transmembrane segment spans residues 208–228 (AALLCAIHGATVENTLFEDGD). Positions 215 and 262 each coordinate a plastoquinone. His-215 provides a ligand contact to Fe cation. His-269 is a Fe cation binding site. A helical membrane pass occupies residues 279-295 (GLWMSALGVVGLALNLR).

It belongs to the reaction center PufL/M/PsbA/D family. As to quaternary structure, PSII is composed of 1 copy each of membrane proteins PsbA, PsbB, PsbC, PsbD, PsbE, PsbF, PsbH, PsbI, PsbJ, PsbK, PsbL, PsbM, PsbT, PsbX, PsbY, PsbZ, Psb30/Ycf12, at least 3 peripheral proteins of the oxygen-evolving complex and a large number of cofactors. It forms dimeric complexes. The D1/D2 heterodimer binds P680, chlorophylls that are the primary electron donor of PSII, and subsequent electron acceptors. It shares a non-heme iron and each subunit binds pheophytin, quinone, additional chlorophylls, carotenoids and lipids. There is also a Cl(-1) ion associated with D1 and D2, which is required for oxygen evolution. The PSII complex binds additional chlorophylls, carotenoids and specific lipids. is required as a cofactor.

Its subcellular location is the plastid. The protein resides in the chloroplast thylakoid membrane. The enzyme catalyses 2 a plastoquinone + 4 hnu + 2 H2O = 2 a plastoquinol + O2. Photosystem II (PSII) is a light-driven water:plastoquinone oxidoreductase that uses light energy to abstract electrons from H(2)O, generating O(2) and a proton gradient subsequently used for ATP formation. It consists of a core antenna complex that captures photons, and an electron transfer chain that converts photonic excitation into a charge separation. The D1/D2 (PsbA/PsbD) reaction center heterodimer binds P680, the primary electron donor of PSII as well as several subsequent electron acceptors. D2 is needed for assembly of a stable PSII complex. This chain is Photosystem II D2 protein, found in Solanum bulbocastanum (Wild potato).